The sequence spans 232 residues: Small ribosomal subunit protein uS2 (232 aa).

This sequence belongs to the universal ribosomal protein uS2 family.

This Desulforamulus reducens (strain ATCC BAA-1160 / DSM 100696 / MI-1) (Desulfotomaculum reducens) protein is Small ribosomal subunit protein uS2.